The chain runs to 362 residues: Biotin synthase (362 aa).

One can recognise a Radical SAM core domain in the interval 39–267 (NVVQVSTLLS…ETQVRLSAGR (229 aa)). Residues Cys-54, Cys-58, and Cys-61 each coordinate [4Fe-4S] cluster. 4 residues coordinate [2Fe-2S] cluster: Cys-98, Cys-130, Cys-190, and Arg-262. Positions 317–362 (PFTKVSQPTTVEAKDSRYESLGEKPKWSRPSHTIEKNLELSGKGKN) are disordered. The segment covering 328–354 (EAKDSRYESLGEKPKWSRPSHTIEKNL) has biased composition (basic and acidic residues).

This sequence belongs to the radical SAM superfamily. Biotin synthase family. Homodimer. Requires [4Fe-4S] cluster as cofactor. [2Fe-2S] cluster serves as cofactor.

It catalyses the reaction (4R,5S)-dethiobiotin + (sulfur carrier)-SH + 2 reduced [2Fe-2S]-[ferredoxin] + 2 S-adenosyl-L-methionine = (sulfur carrier)-H + biotin + 2 5'-deoxyadenosine + 2 L-methionine + 2 oxidized [2Fe-2S]-[ferredoxin]. The protein operates within cofactor biosynthesis; biotin biosynthesis; biotin from 7,8-diaminononanoate: step 2/2. In terms of biological role, catalyzes the conversion of dethiobiotin (DTB) to biotin by the insertion of a sulfur atom into dethiobiotin via a radical-based mechanism. In Flavobacterium psychrophilum (strain ATCC 49511 / DSM 21280 / CIP 103535 / JIP02/86), this protein is Biotin synthase.